The chain runs to 390 residues: LL-diaminopimelate aminotransferase 2 (390 aa).

Substrate is bound by residues tyrosine 13 and glycine 38. Pyridoxal 5'-phosphate is bound by residues tyrosine 67, 102–103 (SK), tyrosine 127, asparagine 177, tyrosine 208, and 236–238 (SLS). Residues lysine 103, tyrosine 127, and asparagine 177 each contribute to the substrate site. Lysine 239 bears the N6-(pyridoxal phosphate)lysine mark. Arginine 247 is a pyridoxal 5'-phosphate binding site. Arginine 365 provides a ligand contact to substrate.

The protein belongs to the class-I pyridoxal-phosphate-dependent aminotransferase family. LL-diaminopimelate aminotransferase subfamily. In terms of assembly, homodimer. The cofactor is pyridoxal 5'-phosphate.

It catalyses the reaction (2S,6S)-2,6-diaminopimelate + 2-oxoglutarate = (S)-2,3,4,5-tetrahydrodipicolinate + L-glutamate + H2O + H(+). It functions in the pathway amino-acid biosynthesis; L-lysine biosynthesis via DAP pathway; LL-2,6-diaminopimelate from (S)-tetrahydrodipicolinate (aminotransferase route): step 1/1. In terms of biological role, involved in the synthesis of meso-diaminopimelate (m-DAP or DL-DAP), required for both lysine and peptidoglycan biosynthesis. Catalyzes the direct conversion of tetrahydrodipicolinate to LL-diaminopimelate. The sequence is that of LL-diaminopimelate aminotransferase 2 from Trichormus variabilis (strain ATCC 29413 / PCC 7937) (Anabaena variabilis).